The primary structure comprises 144 residues: uncharacterized protein (144 aa).

Transmembrane regions (helical) follow at residues 16–36 (FLIF…GAIF), 48–68 (GFIV…ALII), 87–107 (LLPE…LVLL), and 120–140 (VMSL…WYFG).

It localises to the cell membrane. This is an uncharacterized protein from Methanocaldococcus jannaschii (strain ATCC 43067 / DSM 2661 / JAL-1 / JCM 10045 / NBRC 100440) (Methanococcus jannaschii).